The chain runs to 512 residues: Podocan-like protein 1 (512 aa).

The N-terminal stretch at 1–26 (MAESGLAMWPSLLLLLLLPGPPPVAG) is a signal peptide. Positions 37 to 74 (ESLQPLPRACPLRCSCPRVDTVDCDGLDLRVFPDNITR) constitute an LRRNT domain. Asparagine 71 carries N-linked (GlcNAc...) asparagine glycosylation. LRR repeat units lie at residues 75-96 (AAQHLSLQNNQLQELPYNELSR), 99-119 (GLRTLNLHNNLISSEGLPDEA), 125-146 (QLQHLCVAHNKLSVAPQFLPRS), 147-167 (LRVADLAANQVMEIFPLTFGE), 170-193 (ALRSVYLHNNQLSNAGLPPDAFRG), 196-216 (AIATLSLSNNQLSYLPPSLPP), 217-238 (SLERLHLQNNLISKVPRGALSR), 241-261 (QLRELYLQHNQLTDSGLDATT), 267-288 (SLEYLDLSHNQLTTVPAGLPRT), 289-309 (LAILHLGRNRIRQVEAARLHG), 312-332 (GLRYLLLQHNQLGSSGLPAGA), 338-359 (GLHTLHLYGNGLDRVPPALPRR), 360-380 (LRALVLPHNHVAALGARDLVA), 383-396 (GLTELNLAYNRLAS), 409-430 (ALRSLDLAGNQLTRLPMGLPTG), 431-451 (LRTLQLQRNQLRMLEPEPLAG), and 454-474 (QLRELSLAHNRLRVGDIGPGT).

Belongs to the small leucine-rich proteoglycan (SLRP) family. SLRP class V subfamily. N-glycosylated.

The protein localises to the secreted. It localises to the extracellular space. It is found in the extracellular matrix. The protein is Podocan-like protein 1 (PODNL1) of Homo sapiens (Human).